The sequence spans 237 residues: Neural retina-specific leucine zipper protein (237 aa).

Glycyl lysine isopeptide (Lys-Gly) (interchain with G-Cter in SUMO) cross-links involve residues K20 and K24. Positions 26–64 are disordered; it reads EPSEGRSGVPTASLGSTPYSSVPPSPTFSEPGMVGGGEA. Positions 30 to 93 are minimal transactivation domain (MTD); that stretch reads GRSGVPTASL…SDEVLGLSPD (64 aa). The basic motif stretch occupies residues 159 to 185; that stretch reads RLKQRRRTLKNRGYAQACRSKRLQQRR. In terms of domain architecture, bZIP spans 159 to 222; the sequence is RLKQRRRTLK…DLYKARCDRL (64 aa). The interval 187-208 is leucine-zipper; sequence LEAERARLAAQLDALRAEVARL.

The protein belongs to the bZIP family. As to quaternary structure, interacts with FIZ1; this interaction represses transactivation. Interacts (via the leucine-zipper domain) with CRX. In terms of processing, disumoylated at Lys-20. Sumoylation modulates the transcriptional activity of NRL on RHO and NR2E3 promoters, and is required for normal rod differentiation. Phosphorylated. In terms of tissue distribution, expressed in the retina (at protein level).

It is found in the cytoplasm. The protein localises to the nucleus. Its function is as follows. Acts as a transcriptional activator which regulates the expression of several rod-specific genes, including RHO and PDE6B. Also functions as a transcriptional coactivator, stimulating transcription mediated by the transcription factor CRX and NR2E3. Binds to the rhodopsin promoter in a sequence-specific manner. The chain is Neural retina-specific leucine zipper protein (Nrl) from Mus musculus (Mouse).